The primary structure comprises 445 residues: Homoserine dehydrogenase (445 aa).

Phe26, Thr28, and Val29 together coordinate NADPH. NAD(+) is bound by residues Val29 and Ala58. Val29 is an NADP(+) binding site. Lys119 is a binding site for NADPH. Lys119 lines the NADP(+) pocket. Na(+) is bound by residues Glu143, Val146, Gly148, and Ile150. NADP(+) is bound by residues Gly201 and Glu204. Glu204 and Asp215 together coordinate L-homoserine. Lys219 serves as the catalytic Proton donor. Gly321 serves as a coordination point for NADPH. Gly321 contacts NAD(+). Residue Gly321 participates in NADP(+) binding. The ACT domain occupies 368-445 (HLDMDVEDRV…INSVIRLERD (78 aa)).

The protein belongs to the homoserine dehydrogenase family. A metal cation serves as cofactor.

It carries out the reaction L-homoserine + NADP(+) = L-aspartate 4-semialdehyde + NADPH + H(+). The enzyme catalyses L-homoserine + NAD(+) = L-aspartate 4-semialdehyde + NADH + H(+). It functions in the pathway amino-acid biosynthesis; L-methionine biosynthesis via de novo pathway; L-homoserine from L-aspartate: step 3/3. Its pathway is amino-acid biosynthesis; L-threonine biosynthesis; L-threonine from L-aspartate: step 3/5. Its activity is regulated as follows. Feedback inhibition by threonine. Its function is as follows. Catalyzes the conversion of L-aspartate-beta-semialdehyde (L-Asa) to L-homoserine (L-Hse), the third step in the biosynthesis of threonine and methionine from aspartate. The polypeptide is Homoserine dehydrogenase (hom) (Corynebacterium glutamicum (strain ATCC 13032 / DSM 20300 / JCM 1318 / BCRC 11384 / CCUG 27702 / LMG 3730 / NBRC 12168 / NCIMB 10025 / NRRL B-2784 / 534)).